Here is a 483-residue protein sequence, read N- to C-terminus: Cobyric acid synthase (483 aa).

The 187-residue stretch at 244 to 430 folds into the GATase cobBQ-type domain; it reads WLRVIAPVLP…LHGLFDHAEA (187 aa). Residue cysteine 325 is the Nucleophile of the active site. Histidine 422 is a catalytic residue.

It belongs to the CobB/CobQ family. CobQ subfamily.

Its pathway is cofactor biosynthesis; adenosylcobalamin biosynthesis. Its function is as follows. Catalyzes amidations at positions B, D, E, and G on adenosylcobyrinic A,C-diamide. NH(2) groups are provided by glutamine, and one molecule of ATP is hydrogenolyzed for each amidation. This is Cobyric acid synthase from Methylobacillus flagellatus (strain ATCC 51484 / DSM 6875 / VKM B-1610 / KT).